The following is a 309-amino-acid chain: Aspartate carbamoyltransferase catalytic subunit (309 aa).

Residues arginine 55 and threonine 56 each contribute to the carbamoyl phosphate site. L-aspartate is bound at residue lysine 85. Arginine 106, histidine 135, and glutamine 138 together coordinate carbamoyl phosphate. L-aspartate-binding residues include arginine 168 and arginine 230. Positions 268 and 269 each coordinate carbamoyl phosphate.

This sequence belongs to the aspartate/ornithine carbamoyltransferase superfamily. ATCase family. Heterododecamer (2C3:3R2) of six catalytic PyrB chains organized as two trimers (C3), and six regulatory PyrI chains organized as three dimers (R2).

It catalyses the reaction carbamoyl phosphate + L-aspartate = N-carbamoyl-L-aspartate + phosphate + H(+). Its pathway is pyrimidine metabolism; UMP biosynthesis via de novo pathway; (S)-dihydroorotate from bicarbonate: step 2/3. Its function is as follows. Catalyzes the condensation of carbamoyl phosphate and aspartate to form carbamoyl aspartate and inorganic phosphate, the committed step in the de novo pyrimidine nucleotide biosynthesis pathway. The polypeptide is Aspartate carbamoyltransferase catalytic subunit (Vibrio vulnificus (strain CMCP6)).